The chain runs to 352 residues: RNA-binding protein lark (352 aa).

2 consecutive RRM domains span residues phenylalanine 7 to serine 77 and threonine 86 to serine 156. The segment at glutamate 168–arginine 185 adopts a CCHC-type zinc-finger fold. Disordered stretches follow at residues tyrosine 187–arginine 228 and tyrosine 254–tyrosine 352. Phosphoserine is present on residues serine 198 and serine 201. Composition is skewed to pro residues over residues proline 214–phenylalanine 224 and phenylalanine 262–proline 277. The segment covering leucine 279–valine 288 has biased composition (polar residues). 2 positions are modified to phosphoserine: serine 315 and serine 325. Residues glycine 320 to isoleucine 334 show a composition bias toward basic and acidic residues.

Expressed in the CNS and in CCAP neurons of the ventral nervous system (VNS), which control insect ecdysis.

Its subcellular location is the cytoplasm. The protein localises to the nucleus. Its function is as follows. Essential RNA-binding protein. May be required for circadian repression of eclosion. Also essential for nurse cell dumping during oogenesis, the process whereby the cytoplasmic contents of nurse cells are transferred to the oocyte late in it's development. The protein is RNA-binding protein lark (lark) of Drosophila melanogaster (Fruit fly).